We begin with the raw amino-acid sequence, 449 residues long: Secretin receptor (449 aa).

The signal sequence occupies residues 1–25 (MLSTMRPRLSLLLLRLLLLTKAAHT). Over 26-141 (VGVPPRLCDV…NERRHAYLLK (116 aa)) the chain is Extracellular. Disulfide bonds link Cys-46–Cys-75, Cys-66–Cys-107, and Cys-89–Cys-123. Asn-72, Asn-100, Asn-106, and Asn-128 each carry an N-linked (GlcNAc...) asparagine glycan. The helical transmembrane segment at 142–167 (LKVMYTVGYSSSLAMLLVALSILCSF) threads the bilayer. Topologically, residues 168-174 (RRLHCTR) are cytoplasmic. A helical membrane pass occupies residues 175–195 (NYIHMHLFVSFILRALSNFIK). Over 196 to 216 (DAVLFSSDDVTYCDAHKVGCK) the chain is Extracellular. A disulfide bridge links Cys-215 with Cys-285. A helical transmembrane segment spans residues 217-239 (LVMIFFQYCIMANYAWLLVEGLY). The Cytoplasmic portion of the chain corresponds to 240–254 (LHTLLAISFFSERKY). A helical membrane pass occupies residues 255–276 (LQAFVLLGWGSPAIFVALWAIT). Residues 277–291 (RHFLENTGCWDINAN) are Extracellular-facing. Asn-291 carries an N-linked (GlcNAc...) asparagine glycan. Residues 292–315 (ASVWWVIRGPVILSILINFIFFIN) traverse the membrane as a helical segment. Residues 316-340 (ILRILMRKLRTQETRGSETNHYKRL) lie on the Cytoplasmic side of the membrane. Residues 341 to 356 (AKSTLLLIPLFGIHYI) traverse the membrane as a helical segment. Topologically, residues 357–367 (VFAFSPEDAME) are extracellular. The chain crosses the membrane as a helical span at residues 368 to 391 (VQLFFELALGSFQGLVVAVLYCFL). Over 392-449 (NGEVQLEVQKKWRQWHLQEFPLRPVAFNNSFSNATNGPTHSTKASTEQSRSIPRASII) the chain is Cytoplasmic. Positions 425 to 442 (ATNGPTHSTKASTEQSRS) are enriched in polar residues. Residues 425 to 449 (ATNGPTHSTKASTEQSRSIPRASII) are disordered.

The protein belongs to the G-protein coupled receptor 2 family. Phosphorylated on Ser and Thr residues at the cytoplasmic C-terminus by G protein-coupled receptor kinases (GRKs). Post-translationally, N-glycosylated. In terms of tissue distribution, in the brain, expressed in the central amygdala, hippocampus, area postrema, nucleus of the tractus solitary and cerebellum.

The protein localises to the cell membrane. It is found in the basolateral cell membrane. In terms of biological role, g protein-coupled receptor activated by secretin (SCT), which is involved in different processes such as regulation of the pH of the duodenal content, food intake and water homeostasis. Ligand binding causes a conformation change that triggers signaling via guanine nucleotide-binding proteins (G proteins) and activates cAMP-dependent pathway. Upon binding to secretin, regulates the pH of the duodenum by (1) inhibiting the secretion of gastric acid from the parietal cells of the stomach and (2) stimulating the production of bicarbonate (NaHCO(3)) from the ductal cells of the pancreas. In addition to regulating the pH of the duodenal content, plays a central role in diet induced thermogenesis: acts as a non-sympathetic brown fat (BAT) activator mediating prandial thermogenesis, which consequentially induces satiation. Mechanistically, secretin released by the gut after a meal binds to secretin receptor (SCTR) in brown adipocytes, activating brown fat thermogenesis by stimulating lipolysis, which is sensed in the brain and promotes satiation. Also able to stimulate lipolysis in white adipocytes. Also plays an important role in cellular osmoregulation by regulating renal water reabsorption. Also plays a role in the central nervous system: required for synaptic plasticity. This Rattus norvegicus (Rat) protein is Secretin receptor.